Consider the following 525-residue polypeptide: Putative ankyrin repeat protein FPV228 (525 aa).

ANK repeat units lie at residues 39–71 (HPDNPLLEAVKLTNTDMIKTLLDYGICINTRDI), 72–122 (LGNT…ACNN), 123–152 (LNQTPLHLAAESNNTTLLKILLYNNAKVNI), 156–185 (YGNTCLHYAVRGRNIESIKLLLSYNVDVNI), 190–226 (YWYSALHEAVQIGDSKISRCIVSLLLCNKANVNTRCR), 227–254 (LNTTPIFYAINCIDTLKLLLENGADINA), 258–287 (NDNAVIHLATENRRYDIIKTLLDYGADVNM), 291–320 (RGKTPLYYATENYSYRNMKLLLDHGSNPNI), and 324–353 (IMNTPLFISIKCTCIENTKMLLDSGADINH).

The polypeptide is Putative ankyrin repeat protein FPV228 (Fowlpox virus (strain NVSL) (FPV)).